A 349-amino-acid chain; its full sequence is GTPase Obg (349 aa).

The Obg domain maps to 1 to 159 (MKFLDEAKVY…RWIWLRLKLI (159 aa)). An OBG-type G domain is found at 160 to 327 (ADAGLVGLPN…ALRALVAVIG (168 aa)). GTP contacts are provided by residues 166-173 (GLPNAGKS), 191-195 (FTTLH), 212-215 (DIPG), 279-282 (NKID), and 308-310 (SGV). Mg(2+) is bound by residues Ser173 and Thr193.

The protein belongs to the TRAFAC class OBG-HflX-like GTPase superfamily. OBG GTPase family. As to quaternary structure, monomer. Mg(2+) is required as a cofactor.

The protein localises to the cytoplasm. In terms of biological role, an essential GTPase which binds GTP, GDP and possibly (p)ppGpp with moderate affinity, with high nucleotide exchange rates and a fairly low GTP hydrolysis rate. Plays a role in control of the cell cycle, stress response, ribosome biogenesis and in those bacteria that undergo differentiation, in morphogenesis control. The protein is GTPase Obg of Rhodopseudomonas palustris (strain BisA53).